The sequence spans 224 residues: Myogenin (224 aa).

Phosphoserine; by CaMK2G occurs at positions 77 and 79. The bHLH domain maps to 81 to 132 (DRRRAATLREKRRLKKVNEAFEALKRSTLLNPNQRLPKVEILRSAIQYIERL). The residue at position 87 (T87) is a Phosphothreonine; by CaMK2G.

In terms of assembly, homodimer and heterodimer with E12; heterodimerization enhances MYOG DNA-binding and transcriptional activities. Interacts with SMARCA4/BRG1/BAF190A. Interacts (via C-terminal region) with SSRP1 and SUPT16H; the interaction is indicative of an interaction with the FACT complex. Interacts with CSRP3. Post-translationally, phosphorylated by CAMK2G on threonine and serine amino acids in a muscle activity-dependent manner. Phosphorylation of Thr-87 impairs both DNA-binding and trans-activation functions in contracting muscles.

It localises to the nucleus. In terms of biological role, acts as a transcriptional activator that promotes transcription of muscle-specific target genes and plays a role in muscle differentiation, cell cycle exit and muscle atrophy. Essential for the development of functional embryonic skeletal fiber muscle differentiation. However is dispensable for postnatal skeletal muscle growth; phosphorylation by CAMK2G inhibits its transcriptional activity in respons to muscle activity. Required for the recruitment of the FACT complex to muscle-specific promoter regions, thus promoting gene expression initiation. During terminal myoblast differentiation, plays a role as a strong activator of transcription at loci with an open chromatin structure previously initiated by MYOD1. Together with MYF5 and MYOD1, co-occupies muscle-specific gene promoter core regions during myogenesis. Also cooperates with myocyte-specific enhancer factor MEF2D and BRG1-dependent recruitment of SWI/SNF chromatin-remodeling enzymes to alter chromatin structure at myogenic late gene promoters. Facilitates cell cycle exit during terminal muscle differentiation through the up-regulation of miR-20a expression, which in turn represses genes involved in cell cycle progression. Binds to the E-box containing (E1) promoter region of the miR-20a gene. Also plays a role in preventing reversal of muscle cell differentiation. Contributes to the atrophy-related gene expression in adult denervated muscles. Induces fibroblasts to differentiate into myoblasts. The chain is Myogenin (MYOG) from Bos taurus (Bovine).